We begin with the raw amino-acid sequence, 105 residues long: Large ribosomal subunit protein uL24 (105 aa).

Belongs to the universal ribosomal protein uL24 family. As to quaternary structure, part of the 50S ribosomal subunit.

In terms of biological role, one of two assembly initiator proteins, it binds directly to the 5'-end of the 23S rRNA, where it nucleates assembly of the 50S subunit. Its function is as follows. One of the proteins that surrounds the polypeptide exit tunnel on the outside of the subunit. This chain is Large ribosomal subunit protein uL24, found in Psychrobacter cryohalolentis (strain ATCC BAA-1226 / DSM 17306 / VKM B-2378 / K5).